We begin with the raw amino-acid sequence, 313 residues long: Dihydroorotate dehydrogenase B (NAD(+)), catalytic subunit (313 aa).

FMN-binding positions include S21 and 45 to 46 (KA). Residues K45 and 69-73 (NAIGL) contribute to the substrate site. N99 and N127 together coordinate FMN. Residue N127 participates in substrate binding. Residue C130 is the Nucleophile of the active site. 2 residues coordinate FMN: K165 and I191. 192 to 193 (NT) serves as a coordination point for substrate. FMN contacts are provided by residues G217, 243–244 (GG), and 265–266 (GT).

The protein belongs to the dihydroorotate dehydrogenase family. Type 1 subfamily. In terms of assembly, heterotetramer of 2 PyrK and 2 PyrD type B subunits. Requires FMN as cofactor.

The protein resides in the cytoplasm. The enzyme catalyses (S)-dihydroorotate + NAD(+) = orotate + NADH + H(+). It participates in pyrimidine metabolism; UMP biosynthesis via de novo pathway; orotate from (S)-dihydroorotate (NAD(+) route): step 1/1. In terms of biological role, catalyzes the conversion of dihydroorotate to orotate with NAD(+) as electron acceptor. This chain is Dihydroorotate dehydrogenase B (NAD(+)), catalytic subunit (pyrD), found in Geobacillus kaustophilus (strain HTA426).